We begin with the raw amino-acid sequence, 90 residues long: Probable Fe(2+)-trafficking protein (90 aa).

Belongs to the Fe(2+)-trafficking protein family.

Could be a mediator in iron transactions between iron acquisition and iron-requiring processes, such as synthesis and/or repair of Fe-S clusters in biosynthetic enzymes. In Herminiimonas arsenicoxydans, this protein is Probable Fe(2+)-trafficking protein.